The sequence spans 835 residues: Serine/threonine-protein kinase TNNI3K (835 aa).

Gly2 is lipidated: N-myristoyl glycine. Residues 21-50 (SESYAIIIERLEDNLQIKENEFQELRHIFG) are a coiled coil. ANK repeat units follow at residues 66–96 (RGLS…RPSR), 100–129 (NGFP…DVQQ), 133–162 (GGLT…NVNV), 166–195 (VFFT…DVNV), 199–228 (VGDR…KADV), 234–263 (EDHV…EVQP), 269–298 (YGDT…TESL), 304–335 (FSET…NINH), 339–368 (DGHT…DMNL), and 381–410 (DEQT…PQEE). Residues 463 to 723 (IEFHEIIGSG…EVVSKLEECL (261 aa)) enclose the Protein kinase domain. ATP is bound by residues 469–477 (IGSGSFGKV) and Lys490. The active-site Proton acceptor is the Asp588.

This sequence belongs to the protein kinase superfamily. TKL Ser/Thr protein kinase family. MAP kinase kinase kinase subfamily. As to quaternary structure, interacts with TNNI3, ACTC, ACTA1, MYBPC3, AIP, FABP3 and HADHB. Mg(2+) serves as cofactor. Post-translationally, autophosphorylated.

The protein localises to the nucleus. Its subcellular location is the cytoplasm. The catalysed reaction is L-seryl-[protein] + ATP = O-phospho-L-seryl-[protein] + ADP + H(+). It catalyses the reaction L-threonyl-[protein] + ATP = O-phospho-L-threonyl-[protein] + ADP + H(+). Functionally, may play a role in cardiac physiology. This Rattus norvegicus (Rat) protein is Serine/threonine-protein kinase TNNI3K.